A 267-amino-acid chain; its full sequence is Phosphate import ATP-binding protein PstB 1 (267 aa).

Residues 21 to 262 (LETKDLHVYY…AALQSTSDYV (242 aa)) enclose the ABC transporter domain. Residue 53-60 (GPSGCGKS) participates in ATP binding.

This sequence belongs to the ABC transporter superfamily. Phosphate importer (TC 3.A.1.7) family. As to quaternary structure, the complex is composed of two ATP-binding proteins (PstB), two transmembrane proteins (PstC and PstA) and a solute-binding protein (PstS).

The protein resides in the cell membrane. The catalysed reaction is phosphate(out) + ATP + H2O = ADP + 2 phosphate(in) + H(+). Part of the ABC transporter complex PstSACB involved in phosphate import. Responsible for energy coupling to the transport system. The protein is Phosphate import ATP-binding protein PstB 1 of Streptococcus thermophilus (strain CNRZ 1066).